A 1004-amino-acid polypeptide reads, in one-letter code: NADH:acrylate oxidoreductase (1004 aa).

Thr-455 carries the FMN phosphoryl threonine modification. Positions 508, 527, 535, 536, 540, 541, and 775 each coordinate FAD. Residue Arg-834 is the Proton donor of the active site. FAD is bound by residues His-941, Glu-970, Ala-985, and Leu-986.

Belongs to the FAD-dependent oxidoreductase 2 family. FRD/SDH subfamily. FAD serves as cofactor. It depends on FMN as a cofactor. Post-translationally, is flavinylated on Thr-455 by ApbE, encoded in a neighboring gene. Flavinylation is essential for catalytic activity.

The catalysed reaction is acrylate + NADH + H(+) = propanoate + NAD(+). Functionally, catalyzes the NADH-dependent reduction of acrylate to propanoate. The principal role of ARD in Vibrio seems to be the energy-saving detoxification of acrylate coming from the environment. May also use acrylate as the terminal electron acceptor for NADH regeneration at oxygen deficiency. NADPH cannot replace NADH as the electron donor. Is also able to reduce methacrylate in vitro, but with a much lower efficiency. The chain is NADH:acrylate oxidoreductase from Vibrio harveyi (Beneckea harveyi).